The sequence spans 716 residues: Phospholipid phosphatase-related protein type 3 (716 aa).

Transmembrane regions (helical) follow at residues 18–38 (LPCF…SLYF), 70–90 (LIPL…SIMV), and 131–151 (FVGV…VIQL). The N-linked (GlcNAc...) asparagine glycan is linked to asparagine 167. 3 consecutive transmembrane segments (helical) span residues 205-225 (HATL…SVIS), 231-251 (LKPI…LTQI), and 261-281 (VYAG…HAVG). The disordered stretch occupies residues 311-334 (SMYQQNKSVSTDELGPPGRLEGVP). Residues 312 to 321 (MYQQNKSVST) are compositionally biased toward polar residues. N-linked (GlcNAc...) asparagine glycosylation is present at asparagine 316. A phosphoserine mark is found at serine 320 and serine 351. Residue threonine 374 is modified to Phosphothreonine. A disordered region spans residues 416-488 (GRGLGLPDEA…RVILPPRPGP (73 aa)). A Phosphoserine modification is found at serine 426. Acidic residues predominate over residues 437–460 (VAEEEEEEEEEEEEEEEEEEEEEG). Position 506 is a phosphoserine (serine 506). Residues 548–589 (AMSKAAGGPKAETASSSSASSDSSQYRSPSDRDSASIVTIDA) are disordered. The span at 562-575 (SSSSASSDSSQYRS) shows a compositional bias: low complexity. Serine 641 carries the post-translational modification Phosphoserine. The interval 664 to 694 (GEGLPPPGASEGALGAGSRESTLRRQVGALG) is disordered.

This sequence belongs to the PA-phosphatase related phosphoesterase family.

The protein resides in the membrane. This chain is Phospholipid phosphatase-related protein type 3, found in Rattus norvegicus (Rat).